Reading from the N-terminus, the 661-residue chain is MCFVLLLRRGFRLFGTECGSKTTKWDPVQSLQLNHQSLVLLENCNSRNQFKQVLAQIMRFNLICDTFPMSRLIFFSAITYPENLDLAKLLFLNFTPNPNVFVYNTMISAVSSSKNECFGLYSSMIRHRVSPDRQTFLYLMKASSFLSEVKQIHCHIIVSGCLSLGNYLWNSLVKFYMELGNFGVAEKVFARMPHPDVSSFNVMIVGYAKQGFSLEALKLYFKMVSDGIEPDEYTVLSLLVCCGHLSDIRLGKGVHGWIERRGPVYSSNLILSNALLDMYFKCKESGLAKRAFDAMKKKDMRSWNTMVVGFVRLGDMEAAQAVFDQMPKRDLVSWNSLLFGYSKKGCDQRTVRELFYEMTIVEKVKPDRVTMVSLISGAANNGELSHGRWVHGLVIRLQLKGDAFLSSALIDMYCKCGIIERAFMVFKTATEKDVALWTSMITGLAFHGNGQQALQLFGRMQEEGVTPNNVTLLAVLTACSHSGLVEEGLHVFNHMKDKFGFDPETEHYGSLVDLLCRAGRVEEAKDIVQKKMPMRPSQSMWGSILSACRGGEDIETAELALTELLKLEPEKEGGYVLLSNIYATVGRWGYSDKTREAMENRGVKKTAGYSSVVGVEGLHRFVAAEKQNHPRWTEIKRILQHLYNEMKPKLDCLDLLEIEIK.

The N-terminal 18 residues, 1-18, are a transit peptide targeting the mitochondrion; the sequence is MCFVLLLRRGFRLFGTEC. 13 PPR repeats span residues 99–131, 132–163, 165–195, 196–230, 231–265, 268–298, 299–333, 334–366, 367–401, 402–432, 433–467, 468–498, and 504–539; these read NVFV…RVSP, DRQT…GCLS, GNYL…MPHP, DVSS…GIEP, DEYT…GPVY, NLIL…MKKK, DMRS…DLVS, WNSL…KVKP, DRVT…QLKG, DAFL…ATEK, DVAL…GVTP, NNVT…MKDK, and ETEH…PSQS. The tract at residues 540-615 is type E motif; the sequence is MWGSILSACR…TAGYSSVVGV (76 aa). The tract at residues 616–647 is type E(+) motif; that stretch reads EGLHRFVAAEKQNHPRWTEIKRILQHLYNEMK.

This sequence belongs to the PPR family. PCMP-E subfamily.

Its subcellular location is the mitochondrion. The protein is Pentatricopeptide repeat-containing protein At3g04750, mitochondrial (PCMP-E81) of Arabidopsis thaliana (Mouse-ear cress).